The chain runs to 757 residues: MSWSPSLPTQTCGAWEMKERLGTGGFGNVIRWHNQVTGEQIAIKQCRQELSPKNRDRWCLEIQIMRRLNHPNVVAARDVPEGMQNLAPNDLPLLAMEYCQGGDLRRYLNQFENCCGLREGAILTLLSDIASALRYLHENRIIHRDLKPENIVLQQGEKRLIHKIIDLGYAKELDQGSLCTSFVGTLQYLAPELLEQQKYTVTVDYWSFGTLAFECITGFRPFLPNWQPVQWHSKVRQKSEVDIVVSEDLNGTVKFSSSSPFPNNLNSVLAERLEKWLQLMLTWQPRQRGVDPQYGPNGCFRALDDILNLKLVHILNMVTGTIHTYPVMEDESLQSLKTRIREDTGILETDQELLQEAGLVLLPDKPATQCISDSKTNEGLTLDMDLVFLFDNSKMSYETQITPRPQPESVSCVLQEPKRNLSFFQMRKVWGQVWHSIQTLKEDCNRLQQGQRAAMMNLLRNNSCLSKMKNAMASTAQQLKAKLDFFKTSIQIDLEKYREQTEFGITSDKLLLAWREMEQAVEQCGRENDVKVLVERMMALQTDIVDLQRSPMGRKQGGTLDDLEEQARELYRRLREKPRDQRTEGDSQDMVRLLLQAIQSFEKKVRVIYSQLSKTVVCKQKALELLPKVEEVVRLMNEDEKTVVRLQEKRQKELWNLLKIACSKVRGPVSGSPDSMNVSRLSHPGHLMSQPSSACDSLPDSDKKSEELVAEAHALCSRLESALQDTVKQQDRSFTTLDWSWLQMEDEERCGLEQACD.

The Protein kinase domain occupies 15 to 300 (WEMKERLGTG…DPQYGPNGCF (286 aa)). ATP contacts are provided by residues 21–29 (LGTGGFGNV) and Lys-44. Residue Asp-145 is the Proton acceptor of the active site. Residue Lys-163 forms a Glycyl lysine isopeptide (Lys-Gly) (interchain with G-Cter in ubiquitin) linkage. Phosphoserine; by TBK1 and PKC/PRKCZ is present on Ser-177. Cys-179 carries the post-translational modification S-nitrosocysteine. Ser-181 is subject to Phosphoserine; by TBK1, PKC/PRKCZ and PDPK1. The residue at position 191 (Pro-191) is a Hydroxyproline. The segment at 458–479 (LLRNNSCLSKMKNAMASTAQQL) is leucine-zipper. Ser-670 bears the Phosphoserine; by autocatalysis mark. Position 672 is a phosphoserine (Ser-672). Phosphoserine; by autocatalysis is present on residues Ser-675, Ser-682, Ser-689, Ser-692, Ser-697, Ser-705, Ser-733, and Ser-740. Residues 682–703 (SHPGHLMSQPSSACDSLPDSDK) form a disordered region. The NEMO-binding stretch occupies residues 737–742 (LDWSWL).

This sequence belongs to the protein kinase superfamily. Ser/Thr protein kinase family. I-kappa-B kinase subfamily. Component of the I-kappa-B-kinase (IKK) core complex consisting of CHUK, IKBKB and IKBKG; probably four alpha/CHUK-beta/IKBKB dimers are associated with four gamma/IKBKG subunits. The IKK core complex seems to associate with regulatory or adapter proteins to form a IKK-signalosome holo-complex. The IKK complex associates with TERF2IP/RAP1, leading to promote IKK-mediated phosphorylation of RELA/p65. Part of a complex composed of NCOA2, NCOA3, CHUK/IKKA, IKBKB, IKBKG and CREBBP. Part of a 70-90 kDa complex at least consisting of CHUK/IKKA, IKBKB, NFKBIA, RELA, ELP1 and MAP3K14. Found in a membrane raft complex, at least composed of BCL10, CARD11, DPP4 and IKBKB. Interacts with SQSTM1 through PRKCZ or PRKCI. Forms an NGF-induced complex with IKBKB, PRKCI and TRAF6. May interact with MAVS/IPS1. Interacts with NALP2. Interacts with TICAM1. Interacts with FAF1; the interaction disrupts the IKK complex formation. Interacts with ATM. Part of a ternary complex consisting of TANK, IKBKB and IKBKG. Interacts with NIBP; the interaction is direct. Interacts with ARRB1 and ARRB2. Interacts with TRIM21. Interacts with NLRC5; prevents IKBKB phosphorylation and kinase activity. Interacts with PDPK1. Interacts with EIF2AK2/PKR. The phosphorylated form interacts with PPM1A and PPM1B. Interacts with ZNF268 isoform 2; the interaction is further increased in a TNF-alpha-dependent manner. Interacts with IKBKE. Interacts with ZC3H12A. Interacts with AKAP13. Interacts with LRRC14; disrupts IKBKB-IKBKG interaction preventing I-kappa-B-kinase (IKK) core complex formation and leading to a decrease of IKBKB phosphorylation and NF-kappaB activation. Interacts with SASH1. Interacts with ARFIP2. Interacts with FKBP5. In terms of processing, upon cytokine stimulation, phosphorylated on Ser-177 and Ser-181 by MEKK1 and/or MAP3K14/NIK as well as TBK1 and PRKCZ; which enhances activity. Phosphorylated by MAP3K7/TAK1 in response to NOD1 and NOD2 signaling, promoting activation and phosphorylation of NF-kappa-B inhibitors, leading to NF-kappa-B activation. Once activated, autophosphorylates on the C-terminal serine cluster; which decreases activity and prevents prolonged activation of the inflammatory response. Phosphorylated by the IKK-related kinases TBK1 and IKBKE, which is associated with reduced CHUK/IKKA and IKBKB activity and NF-kappa-B-dependent gene transcription. Dephosphorylated at Ser-177 and Ser-181 by PPM1A and PPM1B. Ubiquitinated. Monoubiquitination involves TRIM21 that leads to inhibition of Tax-induced NF-kappa-B signaling. 'Ser-163' may not serve as a monoubiquitination site. Ubiquitination on 'Ser-163' may modulate phosphorylation on C-terminal serine residues. Post-translationally, hydroxylated by PHD1/EGLN2, loss of hydroxylation under hypoxic conditions results in activation of NF-kappa-B.

The protein localises to the cytoplasm. It localises to the nucleus. The protein resides in the membrane raft. The catalysed reaction is L-seryl-[I-kappa-B protein] + ATP = O-phospho-L-seryl-[I-kappa-B protein] + ADP + H(+). The enzyme catalyses L-seryl-[protein] + ATP = O-phospho-L-seryl-[protein] + ADP + H(+). It carries out the reaction L-threonyl-[protein] + ATP = O-phospho-L-threonyl-[protein] + ADP + H(+). In terms of biological role, serine kinase that plays an essential role in the NF-kappa-B signaling pathway which is activated by multiple stimuli such as inflammatory cytokines, bacterial or viral products, DNA damages or other cellular stresses. Acts as a part of the canonical IKK complex in the conventional pathway of NF-kappa-B activation. Phosphorylates inhibitors of NF-kappa-B on 2 critical serine residues. These modifications allow polyubiquitination of the inhibitors and subsequent degradation by the proteasome. In turn, free NF-kappa-B is translocated into the nucleus and activates the transcription of hundreds of genes involved in immune response, growth control, or protection against apoptosis. In addition to the NF-kappa-B inhibitors, phosphorylates several other components of the signaling pathway including NEMO/IKBKG, NF-kappa-B subunits RELA and NFKB1, as well as IKK-related kinases TBK1 and IKBKE. IKK-related kinase phosphorylations may prevent the overproduction of inflammatory mediators since they exert a negative regulation on canonical IKKs. Phosphorylates FOXO3, mediating the TNF-dependent inactivation of this pro-apoptotic transcription factor. Also phosphorylates other substrates including NAA10, NCOA3, BCL10 and IRS1. Phosphorylates RIPK1 at 'Ser-25' which represses its kinase activity and consequently prevents TNF-mediated RIPK1-dependent cell death. Phosphorylates the C-terminus of IRF5, stimulating IRF5 homodimerization and translocation into the nucleus. The protein is Inhibitor of nuclear factor kappa-B kinase subunit beta (Ikbkb) of Rattus norvegicus (Rat).